Consider the following 150-residue polypeptide: uncharacterized protein (150 aa).

An N-terminal signal peptide occupies residues methionine 1–glycine 21.

This is an uncharacterized protein from Mycobacterium tuberculosis (strain CDC 1551 / Oshkosh).